Here is a 245-residue protein sequence, read N- to C-terminus: Phosphoadenosine 5'-phosphosulfate reductase (245 aa).

The active-site Nucleophile; cysteine thiosulfonate intermediate is Cys-239.

This sequence belongs to the PAPS reductase family. CysH subfamily.

It localises to the cytoplasm. It carries out the reaction [thioredoxin]-disulfide + sulfite + adenosine 3',5'-bisphosphate + 2 H(+) = [thioredoxin]-dithiol + 3'-phosphoadenylyl sulfate. It participates in sulfur metabolism; hydrogen sulfide biosynthesis; sulfite from sulfate: step 3/3. Catalyzes the formation of sulfite from phosphoadenosine 5'-phosphosulfate (PAPS) using thioredoxin as an electron donor. In Alkalilimnicola ehrlichii (strain ATCC BAA-1101 / DSM 17681 / MLHE-1), this protein is Phosphoadenosine 5'-phosphosulfate reductase.